A 235-amino-acid chain; its full sequence is MTSRSRQAAYSGIFINETTGEFPQKEQELFEGIVAVIAVVILTWMVFWMRKVSRNVKVQLEQAVDSALQRGNHHGWALVMMVFFAVAREGLESVFFLLAAFQQDVGIWPPLGAMLGLATAVVFGFLLYWGGIRLNLGAFFKWTSLFILFVAAGLAAGAIRAFHEAGLWNHFQEIAFDMSAVLSTHSLFGTLMEGIFGYQEAPSVSEVAVWFIYLIPALVAFALPPRAGATASRSA.

Topologically, residues 1-28 (MTSRSRQAAYSGIFINETTGEFPQKEQE) are periplasmic. Residues 29–49 (LFEGIVAVIAVVILTWMVFWM) form a helical membrane-spanning segment. Over 50–77 (RKVSRNVKVQLEQAVDSALQRGNHHGWA) the chain is Cytoplasmic. A helical membrane pass occupies residues 78–98 (LVMMVFFAVAREGLESVFFLL). The Periplasmic segment spans residues 99–106 (AAFQQDVG). The helical transmembrane segment at 107 to 127 (IWPPLGAMLGLATAVVFGFLL) threads the bilayer. The Cytoplasmic portion of the chain corresponds to 128-138 (YWGGIRLNLGA). Residues 139–159 (FFKWTSLFILFVAAGLAAGAI) traverse the membrane as a helical segment. Over 160 to 177 (RAFHEAGLWNHFQEIAFD) the chain is Periplasmic. A helical transmembrane segment spans residues 178–198 (MSAVLSTHSLFGTLMEGIFGY). Residues 199 to 203 (QEAPS) lie on the Cytoplasmic side of the membrane. A helical transmembrane segment spans residues 204–224 (VSEVAVWFIYLIPALVAFALP). The Periplasmic segment spans residues 225 to 235 (PRAGATASRSA).

Belongs to the oxidase-dependent Fe transporter (OFeT) (TC 9.A.10.1) family. As to quaternary structure, part of a ferrous iron transporter composed of EfeU, EfeO and EfeB.

Its subcellular location is the cell inner membrane. In terms of biological role, uptake of Fe(2+) ions across the membrane. The polypeptide is Ferrous iron permease EfeU (efeU) (Shigella flexneri serotype 5b (strain 8401)).